The sequence spans 122 residues: Serum amyloid A-1 protein (122 aa).

The signal sequence occupies residues 1-19 (MKLLSGLLLCSLVLGVSSQ). The important for amyloid formation stretch occupies residues 20-45 (RWFSFIGEATQGAWDMWRAYSDMREA). Residues 87–122 (MGHGAEDSMADQAANEWGRSGKDPNHFRPKGLPDKY) are disordered. Residues 105–122 (RSGKDPNHFRPKGLPDKY) show a composition bias toward basic and acidic residues.

It belongs to the SAA family. In terms of assembly, homohexamer; dimer of trimers. Can form amyloid fibrils after partial proteolysis; the native, undenatured protein does not form amyloid fibrils (in vitro). Apolipoprotein of the HDL complex. Binds to heparin. In terms of tissue distribution, detected in liver.

The protein resides in the secreted. Major acute phase protein. The sequence is that of Serum amyloid A-1 protein (SAA1) from Oryctolagus cuniculus (Rabbit).